We begin with the raw amino-acid sequence, 145 residues long: Large ribosomal subunit protein uL13 (145 aa).

This sequence belongs to the universal ribosomal protein uL13 family. Part of the 50S ribosomal subunit.

Functionally, this protein is one of the early assembly proteins of the 50S ribosomal subunit, although it is not seen to bind rRNA by itself. It is important during the early stages of 50S assembly. The sequence is that of Large ribosomal subunit protein uL13 from Bacillus mycoides (strain KBAB4) (Bacillus weihenstephanensis).